We begin with the raw amino-acid sequence, 221 residues long: UPF0758 protein NTHI1125 (221 aa).

The MPN domain maps to proline 98–leucine 221. Positions 170, 172, and 183 each coordinate Zn(2+). The JAMM motif motif lies at histidine 170–aspartate 183.

The protein belongs to the UPF0758 family.

The polypeptide is UPF0758 protein NTHI1125 (Haemophilus influenzae (strain 86-028NP)).